Here is a 313-residue protein sequence, read N- to C-terminus: S-methyl-5'-thioadenosine phosphorylase (313 aa).

Phosphate is bound by residues Thr-20, 68–69, and 101–102; these read RH and SA. Position 203 (Met-203) interacts with substrate. Residue Ser-204 participates in phosphate binding. A substrate-binding site is contributed by 227 to 229; that stretch reads DYD.

It belongs to the PNP/MTAP phosphorylase family. MTAP subfamily. In terms of assembly, homotrimer.

The protein localises to the cytoplasm. It localises to the nucleus. The enzyme catalyses S-methyl-5'-thioadenosine + phosphate = 5-(methylsulfanyl)-alpha-D-ribose 1-phosphate + adenine. It participates in amino-acid biosynthesis; L-methionine biosynthesis via salvage pathway; S-methyl-5-thio-alpha-D-ribose 1-phosphate from S-methyl-5'-thioadenosine (phosphorylase route): step 1/1. In terms of biological role, catalyzes the reversible phosphorylation of S-methyl-5'-thioadenosine (MTA) to adenine and 5-methylthioribose-1-phosphate. Involved in the breakdown of MTA, a major by-product of polyamine biosynthesis. Responsible for the first step in the methionine salvage pathway after MTA has been generated from S-adenosylmethionine. Has broad substrate specificity with 6-aminopurine nucleosides as preferred substrates. This Ajellomyces capsulatus (strain G186AR / H82 / ATCC MYA-2454 / RMSCC 2432) (Darling's disease fungus) protein is S-methyl-5'-thioadenosine phosphorylase.